The chain runs to 338 residues: Large ribosomal subunit protein uL3 (338 aa).

Disordered regions lie at residues His-230–Gln-256 and Pro-315–Pro-338.

It belongs to the universal ribosomal protein uL3 family. In terms of assembly, part of the 50S ribosomal subunit. Forms a cluster with proteins L14 and L24e.

One of the primary rRNA binding proteins, it binds directly near the 3'-end of the 23S rRNA, where it nucleates assembly of the 50S subunit. The sequence is that of Large ribosomal subunit protein uL3 from Pyrobaculum arsenaticum (strain DSM 13514 / JCM 11321 / PZ6).